The chain runs to 79 residues: MSRLGIMVLTLLLLVFIVTSHQDAGEKQATHRGAINFRWRRSLIRRTATEECEEYCEDEEKTCCGLEDGEPVCATTCLG.

The N-terminal stretch at 1 to 20 is a signal peptide; it reads MSRLGIMVLTLLLLVFIVTS. Positions 21–44 are excised as a propeptide; sequence HQDAGEKQATHRGAINFRWRRSLI. 3 disulfide bridges follow: Cys-52–Cys-64, Cys-56–Cys-73, and Cys-63–Cys-77. Position 78 is a leucine amide (Leu-78).

It belongs to the conotoxin O3 superfamily. Expressed by the venom duct.

The protein resides in the secreted. This chain is Conotoxin ArMSGL-021, found in Conus arenatus (Sand-dusted cone).